The sequence spans 504 residues: MSFSVDVLANIAIELQRGIGHQDRFQRLITTLRQVLECDASALLRYDSRQFIPLAIDGLAKDVLGRRFALEGHPRLEAIARAGDVVRFPADSELPDPYDGLIPGQESLKVHACVGLPLFAGQNLIGALTLDGMQPDQFDVFSDEELRLIAALAAGALSNALLIEQLESQNMLPGEAAPFEAVKQTQMIGLSPGMTQLKKEIEIVAASDLNVLISGETGTGKELVAKAIHEASPRAVNPLVYLNCAALPESVAESELFGHVKGAFTGAISNRSGKFEMADNGTLFLDEIGELSLALQAKLLRVLQYGDIQRVGDDRSLRVDVRVLAATNRDLREEVLAGRFRADLFHRLSVFPLSVPPLRERGDDVILLAGYFCEQCRLRLGLSRVVLSAGARNLLQHYNFPGNVRELEHAIHRAVVLARATRSGDEVILEAQHFAFPEVTLPPPEVAAVPVVKQNLREATEAFQRETIRQALAQNHHNWAACARMLETDVANLHRLAKRLGLKD.

Aspartate 57 is subject to 4-aspartylphosphate. Positions methionine 187–valine 416 constitute a Sigma-54 factor interaction domain. Residues glycine 215–glutamate 222 and alanine 278–glutamate 287 each bind ATP. Positions tryptophan 479–lysine 498 form a DNA-binding region, H-T-H motif.

The protein operates within nitrogen metabolism; nitric oxide reduction. Required for the expression of anaerobic nitric oxide (NO) reductase, acts as a transcriptional activator for at least the norVW operon. Activation also requires sigma-54. This is Anaerobic nitric oxide reductase transcription regulator NorR from Escherichia coli O6:H1 (strain CFT073 / ATCC 700928 / UPEC).